The primary structure comprises 155 residues: 6,7-dimethyl-8-ribityllumazine synthase (155 aa).

5-amino-6-(D-ribitylamino)uracil-binding positions include Trp-24, 58 to 60, and 82 to 84; these read AFE and AVI. Position 87–88 (87–88) interacts with (2S)-2-hydroxy-3-oxobutyl phosphate; sequence GT. His-90 serves as the catalytic Proton donor. Phe-115 provides a ligand contact to 5-amino-6-(D-ribitylamino)uracil. Arg-129 provides a ligand contact to (2S)-2-hydroxy-3-oxobutyl phosphate.

This sequence belongs to the DMRL synthase family. Forms an icosahedral capsid composed of 60 subunits, arranged as a dodecamer of pentamers.

The enzyme catalyses (2S)-2-hydroxy-3-oxobutyl phosphate + 5-amino-6-(D-ribitylamino)uracil = 6,7-dimethyl-8-(1-D-ribityl)lumazine + phosphate + 2 H2O + H(+). Its pathway is cofactor biosynthesis; riboflavin biosynthesis; riboflavin from 2-hydroxy-3-oxobutyl phosphate and 5-amino-6-(D-ribitylamino)uracil: step 1/2. In terms of biological role, catalyzes the formation of 6,7-dimethyl-8-ribityllumazine by condensation of 5-amino-6-(D-ribitylamino)uracil with 3,4-dihydroxy-2-butanone 4-phosphate. This is the penultimate step in the biosynthesis of riboflavin. The chain is 6,7-dimethyl-8-ribityllumazine synthase from Teredinibacter turnerae (strain ATCC 39867 / T7901).